The chain runs to 111 residues: Ig heavy chain V-III region HPC76 (111 aa).

One can recognise an Ig-like domain in the interval 1 to 110 (ESGGGLVQPG…WGQGTTLTVS (110 aa)).

The polypeptide is Ig heavy chain V-III region HPC76 (Mus musculus (Mouse)).